We begin with the raw amino-acid sequence, 350 residues long: Deoxyribonuclease-2-alpha (350 aa).

An N-terminal signal peptide occupies residues M1–A19. The cysteines at positions 22 and 162 are disulfide-linked. N89, N215, N269, and N293 each carry an N-linked (GlcNAc...) asparagine glycan. Intrachain disulfides connect C270–C350 and C311–C330. The active site involves H298.

Belongs to the DNase II family. Ubiquitous.

It is found in the lysosome. The enzyme catalyses Endonucleolytic cleavage to nucleoside 3'-phosphates and 3'-phosphooligonucleotide end-products.. Hydrolyzes DNA under acidic conditions with a preference for double-stranded DNA. Plays a major role in the clearance of nucleic acids generated through apoptosis, hence preventing autoinflammation. Necessary for proper fetal development and for definitive erythropoiesis in fetal liver and bone marrow, where it degrades nuclear DNA expelled from erythroid precursor cells. The protein is Deoxyribonuclease-2-alpha (Dnase2) of Rattus norvegicus (Rat).